Reading from the N-terminus, the 305-residue chain is Phosphopantetheine adenylyltransferase (305 aa).

It belongs to the eukaryotic CoaD family.

The protein resides in the cytoplasm. It localises to the nucleus. It catalyses the reaction (R)-4'-phosphopantetheine + ATP + H(+) = 3'-dephospho-CoA + diphosphate. Reversibly transfers an adenylyl group from ATP to 4'-phosphopantetheine, yielding dephospho-CoA (dPCoA) and pyrophosphate. Plays a role in the physiological regulation of the intracellular CoA concentration. This chain is Phosphopantetheine adenylyltransferase (CAB4), found in Saccharomyces cerevisiae (strain ATCC 204508 / S288c) (Baker's yeast).